The primary structure comprises 436 residues: ATP-dependent RNA helicase RhlB (436 aa).

Residues 9 to 37 (QKFADFPLHKEVHQALNEAGFEFCTPIQA) carry the Q motif motif. The Helicase ATP-binding domain occupies 40-219 (LPILLEKKDI…YDHMNEPEKV (180 aa)). 53 to 60 (AQTGTGKT) contacts ATP. The short motif at 165-168 (DEAD) is the DEAD box element. Residues 243-390 (KMPLLLSLLE…VTSYDSDALL (148 aa)) form the Helicase C-terminal domain. Positions 392–436 (DIPPPVRIHRKPSTHTRNTRDRGASRPQGGQRSGPRRHDRTRRHS) are disordered. The segment covering 425 to 436 (GPRRHDRTRRHS) has biased composition (basic residues).

The protein belongs to the DEAD box helicase family. RhlB subfamily. Component of the RNA degradosome, which is a multiprotein complex involved in RNA processing and mRNA degradation.

It localises to the cytoplasm. It carries out the reaction ATP + H2O = ADP + phosphate + H(+). In terms of biological role, DEAD-box RNA helicase involved in RNA degradation. Has RNA-dependent ATPase activity and unwinds double-stranded RNA. This is ATP-dependent RNA helicase RhlB from Shewanella halifaxensis (strain HAW-EB4).